The chain runs to 175 residues: NADH-ubiquinone oxidoreductase chain 6 (175 aa).

5 helical membrane-spanning segments follow: residues 1-21 (MMMY…VGVS), 25-45 (SPIY…GVIL), 47-67 (FGGS…MLVV), 88-108 (VVLG…IYAL), and 149-169 (YGVW…VIIM).

It belongs to the complex I subunit 6 family. Core subunit of respiratory chain NADH dehydrogenase (Complex I) which is composed of 45 different subunits.

It localises to the mitochondrion inner membrane. The enzyme catalyses a ubiquinone + NADH + 5 H(+)(in) = a ubiquinol + NAD(+) + 4 H(+)(out). Its function is as follows. Core subunit of the mitochondrial membrane respiratory chain NADH dehydrogenase (Complex I) which catalyzes electron transfer from NADH through the respiratory chain, using ubiquinone as an electron acceptor. Essential for the catalytic activity and assembly of complex I. In Balaenoptera physalus (Fin whale), this protein is NADH-ubiquinone oxidoreductase chain 6 (MT-ND6).